A 279-amino-acid chain; its full sequence is uncharacterized protein (279 aa).

The disordered stretch occupies residues 233–279; it reads NDHQLHDSPLCSDVSDSTSNNNYDESLNFSNDNNNSSFNDFDDDNFI. Residues 246–259 show a composition bias toward polar residues; it reads VSDSTSNNNYDESL. The span at 260-271 shows a compositional bias: low complexity; sequence NFSNDNNNSSFN.

This is an uncharacterized protein from Buchnera aphidicola subsp. Baizongia pistaciae (strain Bp).